The sequence spans 1070 residues: DNA-directed RNA polymerase subunit beta (1070 aa).

The protein belongs to the RNA polymerase beta chain family. In terms of assembly, in plastids the minimal PEP RNA polymerase catalytic core is composed of four subunits: alpha, beta, beta', and beta''. When a (nuclear-encoded) sigma factor is associated with the core the holoenzyme is formed, which can initiate transcription.

It localises to the plastid. Its subcellular location is the chloroplast. It catalyses the reaction RNA(n) + a ribonucleoside 5'-triphosphate = RNA(n+1) + diphosphate. In terms of biological role, DNA-dependent RNA polymerase catalyzes the transcription of DNA into RNA using the four ribonucleoside triphosphates as substrates. The protein is DNA-directed RNA polymerase subunit beta of Angiopteris evecta (Mule's foot fern).